The primary structure comprises 113 residues: Iron-sulfur cluster insertion protein ErpA (113 aa).

Residues Cys41, Cys105, and Cys107 each contribute to the iron-sulfur cluster site.

This sequence belongs to the HesB/IscA family. Homodimer. The cofactor is iron-sulfur cluster.

In terms of biological role, required for insertion of 4Fe-4S clusters for at least IspG. This Colwellia psychrerythraea (strain 34H / ATCC BAA-681) (Vibrio psychroerythus) protein is Iron-sulfur cluster insertion protein ErpA.